Reading from the N-terminus, the 315-residue chain is Protein-L-isoaspartate O-methyltransferase (315 aa).

Disordered regions lie at residues 1-47 and 59-89; these read MSGE…KPAA and RALP…AAPK. The span at 14–34 shows a compositional bias: basic and acidic residues; the sequence is EDLKRAPRKSEVRSGSGERHA. Composition is skewed to low complexity over residues 35–47 and 59–81; these read ASAV…KPAA and RALP…LKPA. Residue Ser-162 is part of the active site.

This sequence belongs to the methyltransferase superfamily. L-isoaspartyl/D-aspartyl protein methyltransferase family.

It is found in the cytoplasm. The catalysed reaction is [protein]-L-isoaspartate + S-adenosyl-L-methionine = [protein]-L-isoaspartate alpha-methyl ester + S-adenosyl-L-homocysteine. Catalyzes the methyl esterification of L-isoaspartyl residues in peptides and proteins that result from spontaneous decomposition of normal L-aspartyl and L-asparaginyl residues. It plays a role in the repair and/or degradation of damaged proteins. The sequence is that of Protein-L-isoaspartate O-methyltransferase from Burkholderia ambifaria (strain MC40-6).